Reading from the N-terminus, the 634-residue chain is 1-deoxy-D-xylulose-5-phosphate synthase (634 aa).

Residues His79 and 120-122 contribute to the thiamine diphosphate site; that span reads GHA. Asp151 is a binding site for Mg(2+). Thiamine diphosphate is bound by residues 152-153, Asn180, Tyr292, and Glu376; that span reads GS. Residue Asn180 participates in Mg(2+) binding.

Belongs to the transketolase family. DXPS subfamily. Homodimer. Mg(2+) serves as cofactor. It depends on thiamine diphosphate as a cofactor.

It catalyses the reaction D-glyceraldehyde 3-phosphate + pyruvate + H(+) = 1-deoxy-D-xylulose 5-phosphate + CO2. The protein operates within metabolic intermediate biosynthesis; 1-deoxy-D-xylulose 5-phosphate biosynthesis; 1-deoxy-D-xylulose 5-phosphate from D-glyceraldehyde 3-phosphate and pyruvate: step 1/1. In terms of biological role, catalyzes the acyloin condensation reaction between C atoms 2 and 3 of pyruvate and glyceraldehyde 3-phosphate to yield 1-deoxy-D-xylulose-5-phosphate (DXP). The sequence is that of 1-deoxy-D-xylulose-5-phosphate synthase from Porphyromonas gingivalis (strain ATCC BAA-308 / W83).